Here is a 192-residue protein sequence, read N- to C-terminus: uncharacterized protein (192 aa).

The region spanning 29 to 160 (HRQAAVLIPI…PLDIYRRGDS (132 aa)) is the Nudix hydrolase domain. The Nudix box signature appears at 67–89 (GAVDDTDASVIAAALREAEEEVA). 2 residues coordinate Mg(2+): glutamate 83 and glutamate 87.

The protein belongs to the Nudix hydrolase family. PCD1 subfamily. Mn(2+) is required as a cofactor. The cofactor is Mg(2+).

Probably mediates the hydrolysis of some nucleoside diphosphate derivatives. This is an uncharacterized protein from Escherichia coli (strain SE11).